We begin with the raw amino-acid sequence, 241 residues long: tRNA (guanine-N(7)-)-methyltransferase (241 aa).

S-adenosyl-L-methionine-binding residues include Glu-71, Glu-96, Asp-123, and Asp-146. Residue Asp-146 is part of the active site. Substrate is bound by residues Lys-150, Asp-182, and 219-222 (TKFE).

Belongs to the class I-like SAM-binding methyltransferase superfamily. TrmB family.

The catalysed reaction is guanosine(46) in tRNA + S-adenosyl-L-methionine = N(7)-methylguanosine(46) in tRNA + S-adenosyl-L-homocysteine. It functions in the pathway tRNA modification; N(7)-methylguanine-tRNA biosynthesis. In terms of biological role, catalyzes the formation of N(7)-methylguanine at position 46 (m7G46) in tRNA. In Pseudoalteromonas translucida (strain TAC 125), this protein is tRNA (guanine-N(7)-)-methyltransferase.